The sequence spans 288 residues: Coiled-coil domain-containing protein 190 (288 aa).

The stretch at 16–69 (LERKSARQAEARLSLRLQRLEIICLYHVKSLAREQRQLQKELQRLQQDIIKKRF) forms a coiled coil. Residues 141 to 235 (GERTSCFKEG…SSVDYAGSFK (95 aa)) form a disordered region. The segment covering 177–188 (HDQELSTNKTED) has biased composition (basic and acidic residues). Over residues 203-213 (ANETRSENASQ) the composition is skewed to polar residues.

The chain is Coiled-coil domain-containing protein 190 (Ccdc190) from Mus musculus (Mouse).